A 461-amino-acid chain; its full sequence is ATP-dependent protease ATPase subunit HslU (461 aa).

Residues Val21, 63–68 (GVGKTE), Asp274, Glu339, and Arg411 each bind ATP.

Belongs to the ClpX chaperone family. HslU subfamily. As to quaternary structure, a double ring-shaped homohexamer of HslV is capped on each side by a ring-shaped HslU homohexamer. The assembly of the HslU/HslV complex is dependent on binding of ATP.

The protein localises to the cytoplasm. Its function is as follows. ATPase subunit of a proteasome-like degradation complex; this subunit has chaperone activity. The binding of ATP and its subsequent hydrolysis by HslU are essential for unfolding of protein substrates subsequently hydrolyzed by HslV. HslU recognizes the N-terminal part of its protein substrates and unfolds these before they are guided to HslV for hydrolysis. This is ATP-dependent protease ATPase subunit HslU from Caldanaerobacter subterraneus subsp. tengcongensis (strain DSM 15242 / JCM 11007 / NBRC 100824 / MB4) (Thermoanaerobacter tengcongensis).